Consider the following 352-residue polypeptide: MAAVREPREEAAVGEGEGEEEGRWGGLLPELVEEVVRRVEASGGERWPARKDLVSCACVCRRWREAAAAVVRPLPESGRITFPSSLKQPGPKDFPIQCFVKRNKKKSMFYLYLGLLNGTMDKGKFLMAARRFRRGPHTEYVISLDADDLSQGSNAYVGKLRSDFWGTNFKIYDNQPPYDDAKTSSTRSSQRFGSTHRFGSRRICPQISAGNFNVGQISYKYNLLKSRGPRRMFCTMECPSTQETWENSLKTKSLRCTGTTVLRNKAPRWHEHLQCWCLNFHGRVTVASVKNFQLVATADPSHPDSVGDEETVILQFGKVDSNIFTMDYRQPLSAFQAFAICLSSFGTKLACE.

The span at 1–11 (MAAVREPREEA) shows a compositional bias: basic and acidic residues. The interval 1–23 (MAAVREPREEAAVGEGEGEEEGR) is disordered. The 57-residue stretch at 22–78 (GRWGGLLPELVEEVVRRVEASGGERWPARKDLVSCACVCRRWREAAAAVVRPLPESG) folds into the F-box domain.

The protein belongs to the TUB family. In terms of tissue distribution, ubiquitous.

In Oryza sativa subsp. japonica (Rice), this protein is Tubby-like F-box protein 10 (TULP10).